We begin with the raw amino-acid sequence, 285 residues long: Golgi phosphoprotein 3-like (285 aa).

The interval 1-43 (MTTLTHRTRRTEVSKSCEKKIESEEDTNQERSPDNEDPGDSKD) is disordered. Over residues 10-43 (RTEVSKSCEKKIESEEDTNQERSPDNEDPGDSKD) the composition is skewed to basic and acidic residues. A 1,2-diacyl-sn-glycero-3-phospho-(1D-myo-inositol 4-phosphate) contacts are provided by Trp67 and Arg76. Ser112 is subject to Phosphoserine. Residues Arg157 and Arg160 each coordinate a 1,2-diacyl-sn-glycero-3-phospho-(1D-myo-inositol 4-phosphate). The segment at 176–187 (EKQNFLLFDMTT) is beta-hairpin required for oligomerization.

This sequence belongs to the GOLPH3/VPS74 family. In terms of assembly, homooligomer. Does not interact MYO18; differs from GOLPH3 by its inability to interact with MYO18. May interact with ARF1.

The protein resides in the golgi apparatus. It is found in the golgi stack membrane. It localises to the trans-Golgi network membrane. Its function is as follows. Phosphatidylinositol-4-phosphate-binding protein that may antagonize the action of GOLPH3 which is required for the process of vesicle budding at the Golgi and anterograde transport to the plasma membrane. This chain is Golgi phosphoprotein 3-like (Golph3l), found in Rattus norvegicus (Rat).